Reading from the N-terminus, the 159-residue chain is NADH-quinone oxidoreductase subunit B (159 aa).

Cys-37, Cys-38, Cys-102, and Cys-132 together coordinate [4Fe-4S] cluster.

It belongs to the complex I 20 kDa subunit family. As to quaternary structure, NDH-1 is composed of 14 different subunits. Subunits NuoB, C, D, E, F, and G constitute the peripheral sector of the complex. The cofactor is [4Fe-4S] cluster.

It localises to the cell inner membrane. It carries out the reaction a quinone + NADH + 5 H(+)(in) = a quinol + NAD(+) + 4 H(+)(out). In terms of biological role, NDH-1 shuttles electrons from NADH, via FMN and iron-sulfur (Fe-S) centers, to quinones in the respiratory chain. Couples the redox reaction to proton translocation (for every two electrons transferred, four hydrogen ions are translocated across the cytoplasmic membrane), and thus conserves the redox energy in a proton gradient. This Paraburkholderia phymatum (strain DSM 17167 / CIP 108236 / LMG 21445 / STM815) (Burkholderia phymatum) protein is NADH-quinone oxidoreductase subunit B.